A 476-amino-acid polypeptide reads, in one-letter code: Ovarian-specific serine/threonine-protein kinase Lok (476 aa).

The FHA domain occupies 69–129 (FTAGRGEAND…NGTFVNNEKI (61 aa)). In terms of domain architecture, Protein kinase spans 174-441 (YYVNRKLGSG…IDDVLQSSWL (268 aa)). Residues 180 to 188 (LGSGAYGLV) and lysine 203 each bind ATP. The active-site Proton acceptor is the aspartate 303.

The protein belongs to the protein kinase superfamily. CAMK Ser/Thr protein kinase family. CDS1 subfamily. As to expression, in stage 3 embryos, both isoforms are expressed in both somatic and pole cell nuclei. Expression in pole cell nuclei is sustained until stage 9 and weakly expressed after pole cell invagination into the abdominal cavity.

It localises to the nucleus speckle. It carries out the reaction L-seryl-[protein] + ATP = O-phospho-L-seryl-[protein] + ADP + H(+). It catalyses the reaction L-threonyl-[protein] + ATP = O-phospho-L-threonyl-[protein] + ADP + H(+). In terms of biological role, may have a role in germline establishment. This is Ovarian-specific serine/threonine-protein kinase Lok (lok) from Drosophila melanogaster (Fruit fly).